The sequence spans 330 residues: Ferredoxin--NADP reductase 2 (330 aa).

Positions 37, 45, 50, 90, 124, 286, and 327 each coordinate FAD.

It belongs to the ferredoxin--NADP reductase type 2 family. Homodimer. The cofactor is FAD.

The catalysed reaction is 2 reduced [2Fe-2S]-[ferredoxin] + NADP(+) + H(+) = 2 oxidized [2Fe-2S]-[ferredoxin] + NADPH. In Shouchella clausii (strain KSM-K16) (Alkalihalobacillus clausii), this protein is Ferredoxin--NADP reductase 2.